The chain runs to 126 residues: S-adenosylmethionine decarboxylase proenzyme (126 aa).

Catalysis depends on serine 63, which acts as the Schiff-base intermediate with substrate; via pyruvic acid. Position 63 is a pyruvic acid (Ser); by autocatalysis (serine 63). Catalysis depends on histidine 68, which acts as the Proton acceptor; for processing activity. The Proton donor; for catalytic activity role is filled by cysteine 83.

This sequence belongs to the prokaryotic AdoMetDC family. Type 1 subfamily. As to quaternary structure, heterotetramer of two alpha and two beta chains arranged as a dimer of alpha/beta heterodimers. Pyruvate serves as cofactor. In terms of processing, is synthesized initially as an inactive proenzyme. Formation of the active enzyme involves a self-maturation process in which the active site pyruvoyl group is generated from an internal serine residue via an autocatalytic post-translational modification. Two non-identical subunits are generated from the proenzyme in this reaction, and the pyruvate is formed at the N-terminus of the alpha chain, which is derived from the carboxyl end of the proenzyme. The post-translation cleavage follows an unusual pathway, termed non-hydrolytic serinolysis, in which the side chain hydroxyl group of the serine supplies its oxygen atom to form the C-terminus of the beta chain, while the remainder of the serine residue undergoes an oxidative deamination to produce ammonia and the pyruvoyl group blocking the N-terminus of the alpha chain.

The catalysed reaction is S-adenosyl-L-methionine + H(+) = S-adenosyl 3-(methylsulfanyl)propylamine + CO2. It participates in amine and polyamine biosynthesis; S-adenosylmethioninamine biosynthesis; S-adenosylmethioninamine from S-adenosyl-L-methionine: step 1/1. Catalyzes the decarboxylation of S-adenosylmethionine to S-adenosylmethioninamine (dcAdoMet), the propylamine donor required for the synthesis of the polyamines spermine and spermidine from the diamine putrescine. This Syntrophomonas wolfei subsp. wolfei (strain DSM 2245B / Goettingen) protein is S-adenosylmethionine decarboxylase proenzyme.